A 62-amino-acid polypeptide reads, in one-letter code: Translational regulator CsrA (62 aa).

This sequence belongs to the CsrA/RsmA family. In terms of assembly, homodimer; the beta-strands of each monomer intercalate to form a hydrophobic core, while the alpha-helices form wings that extend away from the core.

The protein resides in the cytoplasm. In terms of biological role, a key translational regulator that binds mRNA to regulate translation initiation and/or mRNA stability. Mediates global changes in gene expression, shifting from rapid growth to stress survival by linking envelope stress, the stringent response and the catabolite repression systems. Usually binds in the 5'-UTR; binding at or near the Shine-Dalgarno sequence prevents ribosome-binding, repressing translation, binding elsewhere in the 5'-UTR can activate translation and/or stabilize the mRNA. Its function is antagonized by small RNA(s). The protein is Translational regulator CsrA of Haemophilus ducreyi (strain 35000HP / ATCC 700724).